The sequence spans 341 residues: Protein MENT (341 aa).

Residues 1 to 23 form the signal peptide; the sequence is MVPAAGALLWVLLLNLGPRAAGA. A disordered region spans residues 115-196; it reads AGKDSTSREL…SPSPTAMPSP (82 aa). The span at 127–155 shows a compositional bias: polar residues; the sequence is ATPNTAGSSSTRFIANSQEPEIRLTSSLP.

In terms of processing, phosphorylation sites are present in the extracellular medium. Plasma. Overexpressed in lymphomas.

Its subcellular location is the secreted. Involved in control of cellular proliferation. Onconcogenic modifier contributing to the tumor suppressor function of DNMT3B. This is Protein MENT (MENT) from Homo sapiens (Human).